The chain runs to 185 residues: Elongation factor P (185 aa).

The protein belongs to the elongation factor P family.

The protein localises to the cytoplasm. Its pathway is protein biosynthesis; polypeptide chain elongation. Involved in peptide bond synthesis. Stimulates efficient translation and peptide-bond synthesis on native or reconstituted 70S ribosomes in vitro. Probably functions indirectly by altering the affinity of the ribosome for aminoacyl-tRNA, thus increasing their reactivity as acceptors for peptidyl transferase. This Bacillus anthracis (strain CDC 684 / NRRL 3495) protein is Elongation factor P.